Consider the following 95-residue polypeptide: Ascorbate-specific PTS system EIIB component (95 aa).

Positions 1 to 95 constitute a PTS EIIB type-2 domain; sequence MENKNLHIIA…EIKQALSKVL (95 aa). The Phosphocysteine intermediate role is filled by Cys12. Cys12 is modified (phosphocysteine).

The protein resides in the cytoplasm. It catalyses the reaction N(pros)-phospho-L-histidyl-[protein] + L-ascorbate(out) = L-ascorbate 6-phosphate(in) + L-histidyl-[protein]. Its function is as follows. The phosphoenolpyruvate-dependent sugar phosphotransferase system (sugar PTS), a major carbohydrate active transport system, catalyzes the phosphorylation of incoming sugar substrates concomitantly with their translocation across the cell membrane. The enzyme II UlaABC PTS system is involved in ascorbate transport. This chain is Ascorbate-specific PTS system EIIB component (ulaB), found in Mycoplasma pneumoniae (strain ATCC 29342 / M129 / Subtype 1) (Mycoplasmoides pneumoniae).